Reading from the N-terminus, the 345-residue chain is L-Ala-D/L-Glu epimerase (345 aa).

2 residues coordinate substrate: Thr134 and Lys159. Lys161 functions as the Proton acceptor; specific for (R)-substrate epimerization in the catalytic mechanism. Asp188 contacts Mg(2+). Residue Asn190 coordinates substrate. Residues Glu216 and Asp241 each coordinate Mg(2+). Lys265 (proton acceptor; specific for (S)-substrate epimerization) is an active-site residue. Substrate is bound by residues Cys292, Asp317, and Asp319.

It belongs to the mandelate racemase/muconate lactonizing enzyme family. The cofactor is Mg(2+).

The enzyme catalyses L-alanyl-L-glutamate = L-alanyl-D-glutamate. The protein operates within cell wall degradation; peptidoglycan degradation. In terms of biological role, catalyzes the epimerization of L-Ala-D-Glu to L-Ala-L-Glu and has probably a role in the metabolism of the murein peptide, of which L-Ala-D-Glu is a component. Is also able to catalyze the reverse reaction and the epimerization of a broad range of other dipeptides; is most efficient with L-Ala-D/L-Phe, L-Ala-D/L-Tyr, and L-Ala-D/L-His. This is L-Ala-D/L-Glu epimerase from Thermotoga maritima (strain ATCC 43589 / DSM 3109 / JCM 10099 / NBRC 100826 / MSB8).